We begin with the raw amino-acid sequence, 120 residues long: UPF0231 protein YacL (120 aa).

It belongs to the UPF0231 family.

This is UPF0231 protein YacL from Salmonella typhi.